The following is a 611-amino-acid chain: MGRLKQKGKAGAAKNYITRTAAVRKLQCSLADFRRLCILKGIFPREPNNRKKANKGSSAPTSFYYAKDIAYLAHEPVLKRLREHKAFAKKLSRALGRGEWSAAKSLEENKPIYRLDHIIKERYPTFVDALRDIDDALCMVFLFATLPSTARLPREIIDNCARLSMQWQLYVMHTNSLRKVFLSIKGVYYQAEVMDQTITWLVPYQFTQNIPTDVDVRVMLTFLELYQTLLGFVFFKLYSDANLVYPPPLDINKDDMAAGVGAFNLQSTHVQPKRNETGKTVDVDGKKVSVKDVRQTIKSIVAADEPQVDVQMGDPDEASPGEEEQFVAHASKSAPDAVPELPTLHMLSSTPSSPSSRLFAPYTFWLSRETSRSIFEFIIRSHGGRVGWPASSGTGSPFDESDESITHVIIDRPVVQKEETPAERELRSRRKYVQPQWVVDSINAGKILLEDTYAQGKLLPPHLSPFGEYEGAYDPTAATNDADMDVETDGEEGEADASGDEKESNTDAVEAALASVAMDDPASVRAAELAAEAAGLDYNIFETKVKKASKSKKPDTASKATEEAEKDMNKMMMSNKQRKLYEKMKYSQQKKAAEKEKLEQRKKQLQKAGGK.

Residues 310–335 form a disordered region; that stretch reads VQMGDPDEASPGEEEQFVAHASKSAP. Over residues 314-325 the composition is skewed to acidic residues; that stretch reads DPDEASPGEEEQ. A BRCT domain is found at 354 to 455; that stretch reads PSSRLFAPYT…KILLEDTYAQ (102 aa). Disordered regions lie at residues 469-506 and 545-611; these read YEGAYDPTAATNDADMDVETDGEEGEADASGDEKESNT and VKKA…AGGK. The segment covering 482–498 has biased composition (acidic residues); sequence ADMDVETDGEEGEADAS. 2 stretches are compositionally biased toward basic and acidic residues: residues 552-569 and 579-602; these read KKPDTASKATEEAEKDMN and KLYEKMKYSQQKKAAEKEKLEQRK. A coiled-coil region spans residues 580 to 609; the sequence is LYEKMKYSQQKKAAEKEKLEQRKKQLQKAG.

The protein belongs to the pescadillo family. In terms of assembly, component of the NOP7 complex, composed of ERB1, NOP7 and YTM1. The complex is held together by ERB1, which interacts with NOP7 via its N-terminal domain and with YTM1 via a high-affinity interaction between the seven-bladed beta-propeller domains of the 2 proteins. The NOP7 complex associates with the 66S pre-ribosome.

The protein resides in the nucleus. The protein localises to the nucleolus. It localises to the nucleoplasm. In terms of biological role, component of the NOP7 complex, which is required for maturation of the 25S and 5.8S ribosomal RNAs and formation of the 60S ribosome. This is Pescadillo homolog from Coprinopsis cinerea (strain Okayama-7 / 130 / ATCC MYA-4618 / FGSC 9003) (Inky cap fungus).